An 88-amino-acid polypeptide reads, in one-letter code: Exodeoxyribonuclease 7 small subunit (88 aa).

The interval 69–88 (ALAEEADPEDGASGADGGGA) is disordered.

Belongs to the XseB family. Heterooligomer composed of large and small subunits.

The protein localises to the cytoplasm. It carries out the reaction Exonucleolytic cleavage in either 5'- to 3'- or 3'- to 5'-direction to yield nucleoside 5'-phosphates.. Functionally, bidirectionally degrades single-stranded DNA into large acid-insoluble oligonucleotides, which are then degraded further into small acid-soluble oligonucleotides. This chain is Exodeoxyribonuclease 7 small subunit, found in Streptomyces coelicolor (strain ATCC BAA-471 / A3(2) / M145).